Here is a 438-residue protein sequence, read N- to C-terminus: GTPase Obg (438 aa).

The 159-residue stretch at 2-160 folds into the Obg domain; that stretch reads SMFLDTAKIS…RELELELKIL (159 aa). The disordered stretch occupies residues 128 to 147; that stretch reads NIRFATPRNPAPEIAENGEP. The 178-residue stretch at 161–338 folds into the OBG-type G domain; the sequence is ADVGLVGFPS…LLDATANLLA (178 aa). GTP contacts are provided by residues 167–174, 192–196, 214–217, 284–287, and 319–321; these read GFPSVGKS, FTTIV, DLPG, NKMD, and STL. Mg(2+) is bound by residues S174 and T194. The OCT domain occupies 360–438; it reads GFSEEEKAFE…IGNFEFEFVD (79 aa).

Belongs to the TRAFAC class OBG-HflX-like GTPase superfamily. OBG GTPase family. Monomer. Mg(2+) is required as a cofactor.

The protein localises to the cytoplasm. Functionally, an essential GTPase which binds GTP, GDP and possibly (p)ppGpp with moderate affinity, with high nucleotide exchange rates and a fairly low GTP hydrolysis rate. Plays a role in control of the cell cycle, stress response, ribosome biogenesis and in those bacteria that undergo differentiation, in morphogenesis control. This Streptococcus uberis (strain ATCC BAA-854 / 0140J) protein is GTPase Obg.